A 603-amino-acid polypeptide reads, in one-letter code: Alpha-1,2-mannosyltransferase algn-9 (603 aa).

Residues 1–25 (MVTHRRKGGSGPPQKPPPRIVDRSS) form a disordered region. The Lumenal portion of the chain corresponds to 1-108 (MVTHRRKGGS…EYSPVYAIRS (108 aa)). A helical membrane pass occupies residues 109–129 (YFYIYLHYIPASLFANLFGDT). Lysine 130 is a topological domain (cytoplasmic). Residues 131–151 (IVVFTLIRLTIGLFCLLGEYY) form a helical membrane-spanning segment. Topologically, residues 152–166 (AFDAICKKINIATGR) are lumenal. A helical transmembrane segment spans residues 167-187 (FFILFSIFSSGMFLASTAFVP). Residues 188-195 (SSFCMAIT) are Cytoplasmic-facing. A helical membrane pass occupies residues 196 to 216 (FYILGAYLNENWTAGIFCVAF). Residues 217 to 218 (ST) are Lumenal-facing. The chain crosses the membrane as a helical span at residues 219-239 (MVGWPFSAVLGLPIVADMLLL). The Cytoplasmic portion of the chain corresponds to 240 to 245 (KGLRIR). A helical membrane pass occupies residues 246–266 (FILTSLVIGLCIGGVQVITDS). Residues 267-310 (HYFGKTVLAPLNIFLYNVVSGPGPSLYGEEPLSFYIKNLFNNWN) lie on the Lumenal side of the membrane. A helical membrane pass occupies residues 311–331 (IVIFAAPFGFPLSLAYFTKVW). The Cytoplasmic portion of the chain corresponds to 332–343 (MSQDRNVALYQR). The chain crosses the membrane as a helical span at residues 344 to 364 (FAPIILLAVTTAAWLLIFGSQ). At 365–370 (AHKEER) the chain is on the lumenal side. The chain crosses the membrane as a helical span at residues 371–391 (FLFPIYPFIAFFAALALDATN). Topologically, residues 392–397 (RLCLKK) are cytoplasmic. Residues 398–418 (LGMDNILSILFILCFAILSAS) traverse the membrane as a helical segment. Topologically, residues 419 to 603 (RTYSIHNNYG…TCTLYRKSNL (185 aa)) are lumenal. Asparagine 443 is a glycosylation site (N-linked (GlcNAc...) asparagine).

Belongs to the glycosyltransferase 22 family.

The protein localises to the endoplasmic reticulum membrane. It catalyses the reaction an alpha-D-Man-(1-&gt;2)-alpha-D-Man-(1-&gt;2)-alpha-D-Man-(1-&gt;3)-[alpha-D-Man-(1-&gt;3)-alpha-D-Man-(1-&gt;6)]-beta-D-Man-(1-&gt;4)-beta-D-GlcNAc-(1-&gt;4)-alpha-D-GlcNAc-diphospho-di-trans,poly-cis-dolichol + a di-trans,poly-cis-dolichyl beta-D-mannosyl phosphate = an alpha-D-Man-(1-&gt;2)-alpha-D-Man-(1-&gt;2)-alpha-D-Man-(1-&gt;3)-[alpha-D-Man-(1-&gt;2)-alpha-D-Man-(1-&gt;3)-alpha-D-Man-(1-&gt;6)]-beta-D-Man-(1-&gt;4)-beta-D-GlcNAc-(1-&gt;4)-alpha-D-GlcNAc-diphospho-di-trans,poly-cis-dolichol + a di-trans,poly-cis-dolichyl phosphate + H(+). The catalysed reaction is an alpha-D-Man-(1-&gt;2)-alpha-D-Man-(1-&gt;2)-alpha-D-Man-(1-&gt;3)-[alpha-D-Man-(1-&gt;2)-alpha-D-Man-(1-&gt;3)-[alpha-D-Man-(1-&gt;6)]-alpha-D-Man-(1-&gt;6)]-beta-D-Man-(1-&gt;4)-beta-D-GlcNAc-(1-&gt;4)-alpha-D-GlcNAc-diphospho-di-trans,poly-cis-dolichol + a di-trans,poly-cis-dolichyl beta-D-mannosyl phosphate = an alpha-D-Man-(1-&gt;2)-alpha-D-Man-(1-&gt;2)-alpha-D-Man-(1-&gt;3)-[alpha-D-Man-(1-&gt;2)-alpha-D-Man-(1-&gt;3)-[alpha-D-Man-(1-&gt;2)-alpha-D-Man-(1-&gt;6)]-alpha-D-Man-(1-&gt;6)]-beta-D-Man-(1-&gt;4)-beta-D-GlcNAc-(1-&gt;4)-alpha-D-GlcNAc-diphospho-di-trans,poly-cis-dolichol + a di-trans,poly-cis-dolichyl phosphate + H(+). Its pathway is protein modification; protein glycosylation. Functionally, catalyzes the transfer of mannose from Dol-P-Man to lipid-linked oligosaccharides. The sequence is that of Alpha-1,2-mannosyltransferase algn-9 from Caenorhabditis elegans.